The primary structure comprises 1484 residues: Chromosome partition protein MukB (1484 aa).

34-41 (GGNGAGKS) provides a ligand contact to ATP. Coiled-coil stretches lie at residues 326–418 (LEAD…QYNQ), 444–472 (LDTF…QTAH), and 509–602 (RHLA…QRAP). The segment at 666 to 783 (PGGAEDQRLN…SLPIFGRAAR (118 aa)) is flexible hinge. Coiled-coil stretches lie at residues 835-923 (EAEI…AKLE), 977-1116 (EMLS…AKAG), and 1209-1265 (VEAI…LQSV). The segment at 1049–1074 (ADSGAEERARQRRDELHAQLSNNRSR) is disordered. Positions 1051-1065 (SGAEERARQRRDELH) are enriched in basic and acidic residues.

Belongs to the SMC family. MukB subfamily. Homodimerization via its hinge domain. Binds to DNA via its C-terminal region. Interacts, and probably forms a ternary complex, with MukE and MukF via its C-terminal region. The complex formation is stimulated by calcium or magnesium. Interacts with tubulin-related protein FtsZ.

It localises to the cytoplasm. Its subcellular location is the nucleoid. Plays a central role in chromosome condensation, segregation and cell cycle progression. Functions as a homodimer, which is essential for chromosome partition. Involved in negative DNA supercoiling in vivo, and by this means organize and compact chromosomes. May achieve or facilitate chromosome segregation by condensation DNA from both sides of a centrally located replisome during cell division. The protein is Chromosome partition protein MukB of Salmonella dublin (strain CT_02021853).